A 365-amino-acid polypeptide reads, in one-letter code: Putative agmatine deiminase (365 aa).

Cys-357 serves as the catalytic Amidino-cysteine intermediate.

This sequence belongs to the agmatine deiminase family.

It carries out the reaction agmatine + H2O = N-carbamoylputrescine + NH4(+). In Yersinia pseudotuberculosis serotype O:1b (strain IP 31758), this protein is Putative agmatine deiminase.